Reading from the N-terminus, the 944-residue chain is Valine--tRNA ligase (944 aa).

The 'HIGH' region signature appears at 43–53 (PNVTGTLHMGH). Residues 550-554 (KMSKS) carry the 'KMSKS' region motif. K553 is an ATP binding site. Residues 878–944 (LVDMDAERTR…TGLREQRAKL (67 aa)) are a coiled coil.

Belongs to the class-I aminoacyl-tRNA synthetase family. ValS type 1 subfamily. As to quaternary structure, monomer.

It is found in the cytoplasm. It catalyses the reaction tRNA(Val) + L-valine + ATP = L-valyl-tRNA(Val) + AMP + diphosphate. Its function is as follows. Catalyzes the attachment of valine to tRNA(Val). As ValRS can inadvertently accommodate and process structurally similar amino acids such as threonine, to avoid such errors, it has a 'posttransfer' editing activity that hydrolyzes mischarged Thr-tRNA(Val) in a tRNA-dependent manner. In Xanthomonas campestris pv. campestris (strain 8004), this protein is Valine--tRNA ligase.